A 318-amino-acid polypeptide reads, in one-letter code: MANTLEQLKLYTTIVADTGDIEAIKRYQPEDATTNPSLILKAAQIPEYESLIDNAIDWAKSQSANLAQQLDDASDKLAVNIGVEILKLVPGRISTEVDARLSFDKEQSIAKAHKLVRLYQEAGVDKSRILIKLASTWEGICAARELEKEGINCNLTLLFSFAQARACAEAGAYLISPFVGRILDWYKKDTGKDYDAVNDPGVVSVTEIYNYYKQHGFNTVVMGASFRNIGEIIELAGCDRLTIGPSLLEELANSQIDITPKLVAATSTVAAEAPLTEAQFRWDFNQDPMAVDKLAEGIRNFAIDQGKLEVMLTAKLAN.

Lys132 functions as the Schiff-base intermediate with substrate in the catalytic mechanism.

It belongs to the transaldolase family. Type 1 subfamily. As to quaternary structure, homodimer.

It localises to the cytoplasm. It carries out the reaction D-sedoheptulose 7-phosphate + D-glyceraldehyde 3-phosphate = D-erythrose 4-phosphate + beta-D-fructose 6-phosphate. It participates in carbohydrate degradation; pentose phosphate pathway; D-glyceraldehyde 3-phosphate and beta-D-fructose 6-phosphate from D-ribose 5-phosphate and D-xylulose 5-phosphate (non-oxidative stage): step 2/3. In terms of biological role, transaldolase is important for the balance of metabolites in the pentose-phosphate pathway. The protein is Transaldolase of Shewanella baltica (strain OS155 / ATCC BAA-1091).